Reading from the N-terminus, the 537-residue chain is Tegument protein BRRF2 (537 aa).

Disordered stretches follow at residues 322-466 (PRFL…AEEF) and 486-537 (GLRV…LSVV). The segment covering 334-347 (EPQQTCSQLTSRGN) has biased composition (polar residues). Low complexity predominate over residues 420 to 441 (VTGSSQAAPSSSSVTPVASLSG). The span at 492 to 517 (DEDEDGSEDGEFSDLDLSDSDHEGDE) shows a compositional bias: acidic residues.

Belongs to the lymphocryptovirus BRRF2 family.

It is found in the virion tegument. This chain is Tegument protein BRRF2, found in Homo sapiens (Human).